The following is a 347-amino-acid chain: ATP-dependent (S)-NAD(P)H-hydrate dehydratase (347 aa).

One can recognise a YjeF C-terminal domain in the interval 53–344 (TLQLVRNIIP…AEVGAAFSKL (292 aa)). A Phosphotyrosine modification is found at Tyr-85. (6S)-NADPHX contacts are provided by residues Gly-153 and 206-212 (NHVEFSR). Asn-240 carries an N-linked (GlcNAc...) asparagine glycan. ATP is bound by residues 246–250 (KGERD) and 265–274 (GSSRRCGGQG). Asp-275 serves as a coordination point for (6S)-NADPHX. Residue Asn-297 is glycosylated (N-linked (GlcNAc...) asparagine).

It belongs to the NnrD/CARKD family. It depends on Mg(2+) as a cofactor.

It is found in the mitochondrion. It carries out the reaction (6S)-NADHX + ATP = ADP + phosphate + NADH + H(+). The enzyme catalyses (6S)-NADPHX + ATP = ADP + phosphate + NADPH + H(+). Its function is as follows. Catalyzes the dehydration of the S-form of NAD(P)HX at the expense of ATP, which is converted to ADP. Together with NAD(P)HX epimerase, which catalyzes the epimerization of the S- and R-forms, the enzyme allows the repair of both epimers of NAD(P)HX, a damaged form of NAD(P)H that is a result of enzymatic or heat-dependent hydration. In Homo sapiens (Human), this protein is ATP-dependent (S)-NAD(P)H-hydrate dehydratase.